We begin with the raw amino-acid sequence, 445 residues long: Nuclear envelope integral membrane protein 1 (445 aa).

Residues 1–44 form the signal peptide; that stretch reads MAGGMKVAVLPAVGAGPWSWGAGGCGAVRLLLVLFGCFVCGSAG. The N-linked (GlcNAc...) asparagine glycan is linked to Asn125. 5 helical membrane passes run 161-181, 186-206, 216-236, 245-265, and 289-309; these read PKLFLIFLLGLTLFFCGDLLS, FYYSTGMSVGIVASLLIIIFI, PIYIILVGGWSFSLYLIQLVF, CYWQYLLSYVLAVGFMSFAVC, and LCFMYSSIQIPHIALAIVVIA. Positions 186–297 are a; required for its colocalization with lamins at the nuclear envelope; sequence FYYSTGMSVG…GLCFMYSSIQ (112 aa). The tract at residues 336–405 is b; required for interaction with RAN-GTP; that stretch reads TVPPRLLTEE…LTPNEVSVHE (70 aa). A required for nuclear localization region spans residues 336 to 445; the sequence is TVPPRLLTEE…LVVQQNSFLT (110 aa). Phosphoserine is present on residues Ser368, Ser424, and Ser425. The segment covering 418-430 has biased composition (acidic residues); the sequence is ELSEETSSEEEDS. The segment at 418–445 is disordered; sequence ELSEETSSEEEDSDSRYPLVVQQNSFLT.

This sequence belongs to the NEMP family. Homooligomer. Interacts with RAN-GTP. Interacts with EMD. Post-translationally, phosphorylation may regulate its interaction with RAN-GTP.

Its subcellular location is the nucleus inner membrane. It localises to the nucleus envelope. In terms of biological role, together with EMD, contributes to nuclear envelope stiffness in germ cells. Required for female fertility. Essential for normal erythropoiesis. Required for efficient nuclear envelope opening and enucleation during the late stages of erythroblast maturation. The chain is Nuclear envelope integral membrane protein 1 (NEMP1) from Bos taurus (Bovine).